The primary structure comprises 122 residues: ATP-dependent Clp protease adapter protein ClpS (122 aa).

The disordered stretch occupies residues 1 to 27 (MVRMATKPPSMTPTPPTGAPPRDDGGS). The segment covering 10–19 (SMTPTPPTGA) has biased composition (pro residues).

Belongs to the ClpS family. Binds to the N-terminal domain of the chaperone ClpA.

Its function is as follows. Involved in the modulation of the specificity of the ClpAP-mediated ATP-dependent protein degradation. The polypeptide is ATP-dependent Clp protease adapter protein ClpS (Paracidovorax citrulli (strain AAC00-1) (Acidovorax citrulli)).